A 328-amino-acid chain; its full sequence is Malate dehydrogenase (328 aa).

13–19 contributes to the NAD(+) binding site; that stretch reads GAAGQIS. 2 residues coordinate substrate: arginine 94 and arginine 100. NAD(+) is bound by residues asparagine 107, glutamine 114, and 131–133; that span reads VGN. Asparagine 133 and arginine 164 together coordinate substrate. Residue histidine 189 is the Proton acceptor of the active site.

It belongs to the LDH/MDH superfamily. MDH type 2 family.

The enzyme catalyses (S)-malate + NAD(+) = oxaloacetate + NADH + H(+). In terms of biological role, catalyzes the reversible oxidation of malate to oxaloacetate. The sequence is that of Malate dehydrogenase from Alcanivorax borkumensis (strain ATCC 700651 / DSM 11573 / NCIMB 13689 / SK2).